The sequence spans 256 residues: Coiled-coil domain-containing protein 90B, mitochondrial (256 aa).

Residues 1–42 constitute a mitochondrion transit peptide; the sequence is MRNRWIWRFLRPECSGIRWISSPHGRLSPALRRGFLTTTTKS. A coiled-coil region spans residues 106-164; sequence AQQEITIQQLMAHLDSIRKDMVILEKSEFANLRAENEKMKIELDQVKQQLINETSRIRA. A helical membrane pass occupies residues 231–253; that stretch reads TIRYLAASVFTCLAIALGFYRFW.

This sequence belongs to the CCDC90 family. Interacts with MCU.

It localises to the mitochondrion membrane. The chain is Coiled-coil domain-containing protein 90B, mitochondrial (Ccdc90b) from Rattus norvegicus (Rat).